The following is a 293-amino-acid chain: Glutamyl-Q tRNA(Asp) synthetase (293 aa).

L-glutamate contacts are provided by residues 8–12 and glutamate 44; that span reads RFAPS. Residues 11–21 carry the 'HIGH' region motif; sequence PSPSGPLHAGS. 4 residues coordinate Zn(2+): cysteine 98, cysteine 100, tyrosine 120, and cysteine 124. Residues tyrosine 183 and arginine 201 each contribute to the L-glutamate site. The short motif at 239–243 is the 'KMSKS' region element; that stretch reads KLSKQ. Lysine 242 serves as a coordination point for ATP.

This sequence belongs to the class-I aminoacyl-tRNA synthetase family. GluQ subfamily. It depends on Zn(2+) as a cofactor.

Its function is as follows. Catalyzes the tRNA-independent activation of glutamate in presence of ATP and the subsequent transfer of glutamate onto a tRNA(Asp). Glutamate is transferred on the 2-amino-5-(4,5-dihydroxy-2-cyclopenten-1-yl) moiety of the queuosine in the wobble position of the QUC anticodon. This is Glutamyl-Q tRNA(Asp) synthetase from Janthinobacterium sp. (strain Marseille) (Minibacterium massiliensis).